A 116-amino-acid chain; its full sequence is Vesicle-associated membrane protein 2 (116 aa).

Residues 1-33 (MSATAATAPPAAPAGEGGPPAPPPNLTSNRRLQ) are disordered. N-acetylserine is present on Ser-2. Residues 2–94 (SATAATAPPA…KRKYWWKNLK (93 aa)) are Cytoplasmic-facing. One can recognise a v-SNARE coiled-coil homology domain in the interval 31 to 91 (RLQQTQAQVD…AKLKRKYWWK (61 aa)). The segment at 92–116 (NLKMMIILGVICAIILIIIIVYFST) is required for interaction with SEPT8. The helical; Anchor for type IV membrane protein transmembrane segment at 95–114 (MMIILGVICAIILIIIIVYF) threads the bilayer. The Vesicular segment spans residues 115-116 (ST).

This sequence belongs to the synaptobrevin family. Part of the SNARE core complex containing SNAP25, VAMP2 and STX1A; this complex constitutes the basic catalytic machinery of the complex neurotransmitter release apparatus. Recruited to the SNARE complex following binding of the SNARE complex component STX1A to STXBP1. This complex binds to CPLX1. Interacts with POPDC1 and STX4. Interacts with VAPA and VAPB. Interacts with WDFY2, PRKCZ and PRKCI. Forms a complex with WDFY2 and PRKCZ. Interacts (via N-terminus) with KCNB1 (via N-terminus and C-terminus); stimulates the channel inactivation rate of KCNB1. Interacts with SEPT8; the interaction inhibits interaction of VAMP2 with SYP. Interacts with SYP; the interaction is inhibited by interaction with SEPT8. Interacts with PICALM. Interacts with alpha-synuclein/SNCA. Interacts with STX3. In terms of processing, phosphorylated by PRKCZ in vitro and this phosphorylation is increased in the presence of WDFY2. Post-translationally, (Microbial infection) Targeted and hydrolyzed by C.botulinum neurotoxin type B (BoNT/B, botB) which hydrolyzes the 76-Gln-|-Phe-77 bond and probably inhibits neurotransmitter release. (Microbial infection) Targeted and hydrolyzed by C.botulinum neurotoxin type D (BoNT/D, botD) which probably hydrolyzes the 59-Lys-|-Leu-60 bond and inhibits neurotransmitter release. Note that humans are not known to be infected by C.botulinum type D. In terms of processing, (Microbial infection) Targeted and hydrolyzed by C.botulinum neurotoxin type F (BoNT/F, botF) which hydrolyzes the 58-Gln-|-Lys-59 bond and probably inhibits neurotransmitter release. Post-translationally, (Microbial infection) Targeted and hydrolyzed by C.tetani tetanus toxin (tetX) which hydrolyzes the 76-Gln-|-Phe-77 bond and probably inhibits neurotransmitter release. As to expression, nervous system and skeletal muscle.

The protein resides in the cytoplasmic vesicle. It is found in the secretory vesicle. The protein localises to the synaptic vesicle membrane. Its subcellular location is the cell membrane. Its function is as follows. Involved in the targeting and/or fusion of transport vesicles to their target membrane. Major SNARE protein of synaptic vesicles which mediates fusion of synaptic vesicles to release neurotransmitters. Essential for fast vesicular exocytosis and activity-dependent neurotransmitter release as well as fast endocytosis that mediates rapid reuse of synaptic vesicles. Modulates the gating characteristics of the delayed rectifier voltage-dependent potassium channel KCNB1. The sequence is that of Vesicle-associated membrane protein 2 from Homo sapiens (Human).